Here is a 427-residue protein sequence, read N- to C-terminus: Glutamate-1-semialdehyde 2,1-aminomutase (427 aa).

Lys265 carries the N6-(pyridoxal phosphate)lysine modification.

The protein belongs to the class-III pyridoxal-phosphate-dependent aminotransferase family. HemL subfamily. In terms of assembly, homodimer. Pyridoxal 5'-phosphate serves as cofactor.

The protein localises to the cytoplasm. The enzyme catalyses (S)-4-amino-5-oxopentanoate = 5-aminolevulinate. It functions in the pathway porphyrin-containing compound metabolism; protoporphyrin-IX biosynthesis; 5-aminolevulinate from L-glutamyl-tRNA(Glu): step 2/2. The sequence is that of Glutamate-1-semialdehyde 2,1-aminomutase from Pseudomonas fluorescens (strain Pf0-1).